Here is an 886-residue protein sequence, read N- to C-terminus: MDKNFYKNSLNIFNSNFSMKANLSEKDKFYADFWEKNQIYQQILRKRRGNPRFILHDGPPYANGDIHIGHALNKILKDIIVRYKTMAGFYSPFVPGWDTHGLPIENKIINQIGSKSTLEIRRKSNDFANSQILAQMKQFKKLNLLTDFKQIYQTNTPNYEAKQLKLFKKMVSRGLVYRALKPVYWSPSSQSALAEAEIEYLEYRSPSLFTSFDIKKGNNFVAENDKLIIWTTTPWTLIANSGVAVGENFDYVRIKNGENFYVLAANLLEKLAVIFDWKHYEIIDNFPGRAILGIKYLHPIFEKICPIVSGNHVSLDVGSGLVHLAPLFGEDDYWIGRENNLEMVMHVNDDGKFNENAGQFSGQFYADSNKLITEFLEKKSKILHLSFIDHSFPHDWRTLKPVIYRGTPQWFVSIEKIKKDLEKAIEEIEFPENWLKKRLTKMVVERKDWLISRQRSWGIPLIIFYDQNKDPVLDKPEIFDYIISLVEKFGSRIWYEKTTDELLPEKYQNLGWTKENDILDVWFDSGVSFFAANISDEKPPFDIYFEGSDQYRGWFNSSLINSVIYFGFSPYKKLLSHGFVVDAKGNKMSKSRGNGVDPLLILSKYGCDIFRLWVANSEYYNDIVYSEAIFEQNVEIYRKIRNTVRFLITNLADFKPTKYELTEVDLYIFNKIQKLKNEIIQNYDQNRFVRVVKIINNFIIEFSNFYLSIVKDILYADKKESLKRRQVQYNLYELLQVLNIAIAPIMPTTAEEIYSFIQKNNKQISVHMEEFFKESHFDEELDAKWNEFFQIKDSVYQLIEQKIKSKEIKRPNEVGVLLKTDSDFIKSIDLKKLLMVAKVEFSNGKTEILQLNWEKCPRCWNHFEKINKVCARCFEVLSEIVPEKNS.

The 'HIGH' region motif lies at 60 to 70 (PYANGDIHIGH). Glu-546 contacts L-isoleucyl-5'-AMP. The 'KMSKS' region signature appears at 587 to 591 (KMSKS). Lys-590 is an ATP binding site. Cys-856, Cys-859, Cys-870, and Cys-873 together coordinate Zn(2+).

It belongs to the class-I aminoacyl-tRNA synthetase family. IleS type 1 subfamily. In terms of assembly, monomer. Zn(2+) is required as a cofactor.

The protein localises to the cytoplasm. The catalysed reaction is tRNA(Ile) + L-isoleucine + ATP = L-isoleucyl-tRNA(Ile) + AMP + diphosphate. Its function is as follows. Catalyzes the attachment of isoleucine to tRNA(Ile). As IleRS can inadvertently accommodate and process structurally similar amino acids such as valine, to avoid such errors it has two additional distinct tRNA(Ile)-dependent editing activities. One activity is designated as 'pretransfer' editing and involves the hydrolysis of activated Val-AMP. The other activity is designated 'posttransfer' editing and involves deacylation of mischarged Val-tRNA(Ile). The protein is Isoleucine--tRNA ligase of Mesomycoplasma hyopneumoniae (strain J / ATCC 25934 / NCTC 10110) (Mycoplasma hyopneumoniae).